The primary structure comprises 254 residues: Acetylglutamate kinase (254 aa).

Residues glycine 40–glycine 41, arginine 62, and asparagine 154 contribute to the substrate site. Residues aspartate 177–leucine 182 and isoleucine 205–threonine 207 contribute to the ATP site.

This sequence belongs to the acetylglutamate kinase family. ArgB subfamily. Homodimer.

Its subcellular location is the cytoplasm. It catalyses the reaction N-acetyl-L-glutamate + ATP = N-acetyl-L-glutamyl 5-phosphate + ADP. Its pathway is amino-acid biosynthesis; L-arginine biosynthesis; N(2)-acetyl-L-ornithine from L-glutamate: step 2/4. Functionally, catalyzes the ATP-dependent phosphorylation of N-acetyl-L-glutamate. The polypeptide is Acetylglutamate kinase (Yersinia enterocolitica serotype O:8 / biotype 1B (strain NCTC 13174 / 8081)).